Reading from the N-terminus, the 453-residue chain is Probable exopolygalacturonase B (453 aa).

A signal peptide spans 1–16 (MKFLALAALFASTVSS). 2 N-linked (GlcNAc...) asparagine glycosylation sites follow: asparagine 185 and asparagine 225. The Proton donor role is filled by aspartate 255. A disulfide bridge connects residues cysteine 257 and cysteine 274. N-linked (GlcNAc...) asparagine glycans are attached at residues asparagine 263 and asparagine 275. The active site involves histidine 278. PbH1 repeat units follow at residues 295 to 316 (IENV…RLKA) and 327 to 348 (INNV…VLDQ). N-linked (GlcNAc...) asparagine glycans are attached at residues asparagine 302, asparagine 329, asparagine 354, and asparagine 366. One copy of the PbH1 3 repeat lies at 362 to 405 (PSRVNFTNIVFENIYGTSSGKHGKVVADLTCSPNAVCSGIRLKN). Cysteine 392 and cysteine 398 are joined by a disulfide. Residue asparagine 436 is glycosylated (N-linked (GlcNAc...) asparagine).

This sequence belongs to the glycosyl hydrolase 28 family.

The protein localises to the secreted. It carries out the reaction [(1-&gt;4)-alpha-D-galacturonosyl](n) + H2O = alpha-D-galacturonate + [(1-&gt;4)-alpha-D-galacturonosyl](n-1). In terms of biological role, specific in hydrolyzing the terminal glycosidic bond of polygalacturonic acid and oligogalacturonates. This Neosartorya fischeri (strain ATCC 1020 / DSM 3700 / CBS 544.65 / FGSC A1164 / JCM 1740 / NRRL 181 / WB 181) (Aspergillus fischerianus) protein is Probable exopolygalacturonase B (pgxB).